A 27-amino-acid chain; its full sequence is Delta-conotoxin SuVIA (27 aa).

3 disulfide bridges follow: Cys1-Cys17, Cys8-Cys21, and Cys16-Cys25.

It belongs to the conotoxin O1 superfamily. In terms of tissue distribution, expressed by the venom duct, in the proximal part (indicative of a defensive role).

The protein localises to the secreted. Functionally, this toxin activates voltage-gated sodium channels (Nav1.3/SCN3A (EC(50)=3.98 nM), Nav1.4/SCN4A (EC(50)=4.99 nM), Nav1.6/SCN8A (EC(50)=1.27 nM) and Nav1.7/SCN9A (EC(50)=2.42 nM)). It shifts the voltage-dependence of activation to more hyperpolarized potentials but has only little effect on channel inactivation. In vivo, it induces nocifensive or pain-like behaviors in mice when injected intraplantarly. This is coherent with the specific defensive role deduced from its proximal position in the venom gland. The polypeptide is Delta-conotoxin SuVIA (Conus suturatus (Sutured cone)).